We begin with the raw amino-acid sequence, 335 residues long: [Citrate [pro-3S]-lyase] ligase (335 aa).

In terms of domain architecture, N-acetyltransferase spans 1–131 (MQFERISTEQ…SATRLQKQCS (131 aa)).

The enzyme catalyses holo-[citrate lyase ACP] + acetate + ATP = acetyl-[citrate lyase ACP] + AMP + diphosphate. Acetylation of prosthetic group (2-(5''-phosphoribosyl)-3'-dephosphocoenzyme-A) of the gamma subunit of citrate lyase. This is [Citrate [pro-3S]-lyase] ligase (citC) from Haemophilus influenzae (strain ATCC 51907 / DSM 11121 / KW20 / Rd).